The following is a 463-amino-acid chain: Competence protein ComFA (463 aa).

Zn(2+) contacts are provided by cysteine 60, cysteine 63, cysteine 84, and cysteine 87. Residues isoleucine 133 to isoleucine 285 enclose the Helicase ATP-binding domain. Alanine 146–threonine 153 contacts ATP. Residues aspartate 233–aspartate 236 carry the DEAD box motif. The 147-residue stretch at alanine 317 to aspartate 463 folds into the Helicase C-terminal domain.

It belongs to the DEAD box helicase family. In terms of assembly, monomer and dimer in solution. Interacts with DprA and ComFC; ComFA-ComFC form rings about 150 Angstroms in diameter with apparent 6-fold symmetry. It depends on Zn(2+) as a cofactor.

The protein localises to the cytoplasm. Its function is as follows. Involved in transformation (genetic competence for DNA uptake). Required for DNA uptake but not for DNA binding to cells. DNA uptake is energy dependent, this protein may provide the driving force for DNA uptake. Does not have helicase activity, translocates on single-stranded (ss)DNA in a 5'-3' direction in an ATP-dependent manner, but does not unwind double-stranded (ds)DNA. ATP hydrolysis causes the release of ssDNA from ComFA. A ssDNA-stimulated ATPase; dsDNA does not stimulate ATPase. ATP hydrolysis causes the release of ssDNA from ComFA. Binds ssDNA but only very poorly to dsDNA in the absence of ATP. Binding to ssDNA does not require free DNA ends. This Bacillus subtilis (strain 168) protein is Competence protein ComFA.